A 198-amino-acid chain; its full sequence is HTH-type transcriptional regulator BetI (198 aa).

One can recognise an HTH tetR-type domain in the interval 8–68; that stretch reads PLRRRELIDA…ATMRHLLREL (61 aa). A DNA-binding region (H-T-H motif) is located at residues 31 to 50; the sequence is TVAQIAHEAGVSPALAHHYF.

Its pathway is amine and polyamine biosynthesis; betaine biosynthesis via choline pathway [regulation]. In terms of biological role, repressor involved in the biosynthesis of the osmoprotectant glycine betaine. It represses transcription of the choline transporter BetT and the genes of BetAB involved in the synthesis of glycine betaine. The sequence is that of HTH-type transcriptional regulator BetI from Brucella suis biovar 1 (strain 1330).